Reading from the N-terminus, the 193-residue chain is 7-methyl-GTP pyrophosphatase (193 aa).

The Proton acceptor role is filled by Asp70.

This sequence belongs to the Maf family. YceF subfamily. A divalent metal cation is required as a cofactor.

It localises to the cytoplasm. The catalysed reaction is N(7)-methyl-GTP + H2O = N(7)-methyl-GMP + diphosphate + H(+). In terms of biological role, nucleoside triphosphate pyrophosphatase that hydrolyzes 7-methyl-GTP (m(7)GTP). May have a dual role in cell division arrest and in preventing the incorporation of modified nucleotides into cellular nucleic acids. The protein is 7-methyl-GTP pyrophosphatase of Aliivibrio fischeri (strain ATCC 700601 / ES114) (Vibrio fischeri).